The sequence spans 383 residues: MNLGKQLTLPAVAVVASVVLLGCERPPPEVVQKGYRGVAMEQNYNPRLLEASIKANLPVESLPAAAPGGPSVSDVYENVQVLKDLSVAEFTRTMVAVTTWVAPKEGCNYCHVPGNWASDDIYTKVVSRRMFELVRATNSNWKDHVAETGVTCYTCHRGNPVPKYVWVTDPGPNQPSGVTPTGQNYASSTVAYSALPLDPYTPFLDQSNEIRVIGQTALPAGNTTSLKQAEWTYGLMMQISDSLGVNCTFCHNSRSFYDWKQSTPQRTTAWYAIRHVRDINQNYIWPLNDALPASRKGPYGDPFKVGCMTCHQGAYKPLYGAQMAKDYPALYESAPAEAAPATEEAPAAEAEAVEAAPVEEAAPAPVEQAAAPVEDAAPAPQQL.

The signal sequence occupies residues 1–22 (MNLGKQLTLPAVAVVASVVLLG). A lipid anchor (N-palmitoyl cysteine) is attached at Cys-23. Cys-23 carries the S-diacylglycerol cysteine lipid modification. Residues Met-94, Cys-107, Cys-110, His-111, Met-130, His-144, Cys-152, Cys-155, His-156, Met-236, Cys-247, Cys-250, His-251, Cys-307, Cys-310, and His-311 each coordinate heme. Residues 335 to 383 (PAEAAPATEEAPAAEAEAVEAAPVEEAAPAPVEQAAAPVEDAAPAPQQL) are disordered.

In terms of assembly, component of the photosynthetic reaction center composed of protein subunits L (PufL), M (PufM), H (PuhA) and cytochrome C (PufC). The reaction center interacts with light-harvesting antenna complex LH1. Post-translationally, binds 4 heme groups per subunit.

The protein localises to the cellular chromatophore membrane. The reaction center of purple bacteria contains a tightly bound cytochrome molecule which re-reduces the photo oxidized primary electron donor. This Allochromatium vinosum (strain ATCC 17899 / DSM 180 / NBRC 103801 / NCIMB 10441 / D) (Chromatium vinosum) protein is Photosynthetic reaction center cytochrome c subunit (pufC).